The primary structure comprises 111 residues: MSAQVMRPGTPQHEGQEFLSGTDEELAVAMRHYLAYSGRFTVPDMASTENSTRRVIHEVEMSSYPNWIGTTQERVVHIKGDILELSTVHPLVISGIEQRSFLTWRKLPRLT.

Residues 1-21 (MSAQVMRPGTPQHEGQEFLSG) form a disordered region.

The protein operates within secondary metabolite biosynthesis. Its function is as follows. 4'-hydroxy-3'-methoxypropiophenone carrier protein; part of the gene cluster that mediates the biosynthesis of 2,4'-dihydroxy-3'-methoxypropiophenone. The first step of the pathway is the conversion of acetate into acetyl-CoA by the acyl-CoA ligase ppsA. Acetyl-CoA is then used as a starter unit by the polyketide synthase ppsB and condensed with 4 malonyl-CoA unit to produce the pentaketide backbone. During polyketide extension, the polykedite chain is probably reduced and dehydrated by the KR and PT domains, respectively. O-methylation seems to be catalyzed by an unknown methyltransferase rather than by the CMeT domain of ppsB. Two hydroxylations and one further decarboxylation step catalyzed by yet unknown enzymes are then required to yield 4'-hydroxy-3'-methoxypropiophenone. PpsC functions as a carrier protein to transport 4'-hydroxy-3'-methoxypropiophenone to a specific cell compartment in which 4'-hydroxy-3'-methoxypropiophenone is hydroxylated to 2,4'-dihydroxy-3'-methoxypropiophenone by a still to be identified enzyme. The chain is 4'-hydroxy-3'-methoxypropiophenone carrier protein ppsC from Aspergillus oryzae (strain ATCC 42149 / RIB 40) (Yellow koji mold).